Consider the following 382-residue polypeptide: Probable protein phosphatase 2C 65 (382 aa).

The region spanning 47–337 (HVSMSIKQGK…DDCAVVVLYL (291 aa)) is the PPM-type phosphatase domain. The Mn(2+) site is built by Asp83 and Gly84. The interval 107 to 126 (KIRSSKSAGDENIENNSSQS) is disordered. Mn(2+) is bound by residues Asp282 and Asp328.

The protein belongs to the PP2C family. The cofactor is Mg(2+). Mn(2+) serves as cofactor.

The enzyme catalyses O-phospho-L-seryl-[protein] + H2O = L-seryl-[protein] + phosphate. It catalyses the reaction O-phospho-L-threonyl-[protein] + H2O = L-threonyl-[protein] + phosphate. The polypeptide is Probable protein phosphatase 2C 65 (Arabidopsis thaliana (Mouse-ear cress)).